The chain runs to 153 residues: Interleukin-4 (153 aa).

The signal sequence occupies residues 1 to 24 (MGLTSQLLPPLFFLLACAGNFAHG). Intrachain disulfides connect C27-C151, C48-C89, and C70-C123. N62 carries an N-linked (GlcNAc...) asparagine glycan. N129 carries N-linked (GlcNAc...) asparagine glycosylation.

It belongs to the IL-4/IL-13 family.

It localises to the secreted. Participates in at least several B-cell activation processes as well as of other cell types. It is a costimulator of DNA-synthesis. It induces the expression of class II MHC molecules on resting B-cells. It enhances both secretion and cell surface expression of IgE and IgG1. It also regulates the expression of the low affinity Fc receptor for IgE (CD23) on both lymphocytes and monocytes. Positively regulates IL31RA expression in macrophages. Stimulates autophagy in dendritic cells by interfering with mTORC1 signaling and through the induction of RUFY4. The polypeptide is Interleukin-4 (IL4) (Macaca mulatta (Rhesus macaque)).